Reading from the N-terminus, the 444-residue chain is Multidrug resistance protein MdtA (444 aa).

The N-terminal stretch at M1–A20 is a signal peptide. Residues N37–S52 are compositionally biased toward polar residues. 2 disordered regions span residues N37 to P60 and T398 to S444. Residues A406 to E419 are compositionally biased toward low complexity. Polar residues predominate over residues A435 to S444.

This sequence belongs to the membrane fusion protein (MFP) (TC 8.A.1) family. Part of a tripartite efflux system composed of MdtA, MdtB and MdtC.

Its subcellular location is the cell inner membrane. The polypeptide is Multidrug resistance protein MdtA (Yersinia pseudotuberculosis serotype O:1b (strain IP 31758)).